We begin with the raw amino-acid sequence, 24 residues long: Caerulein precursor fragment B4 (24 aa).

As to expression, expressed by the skin glands.

The protein resides in the secreted. Has antibacterial and antifungal activity. The polypeptide is Caerulein precursor fragment B4 (Xenopus borealis (Kenyan clawed frog)).